Here is a 467-residue protein sequence, read N- to C-terminus: MSPQTETKASVGFKAGVKDYKLTYYTPDYETKDTDILAAFRVTPQPGVPPEEAGAAVAAESSTGTWTTVWTDGLTSLDRYKGRCYHIETVIGEENQYIAYVAYPLDLFEEGSVTNMFTSIVGNVFGFKALRALRLEDLRIPTSYSKTFQGPPHGIQVERDKLNKYGRPLLGCTIKPKLGLSAKNYGRAVYECLRGGLDFTKDDENVNSQPFMRWRDRFLFCAEALYKAQAETGEIKGHYLNATAGTCEEMMKRAIFARELGVPIVMHDYLTGGFTANTSLAHYCRDNGLLLHIHRAMHAVIDRQKNHGMHFRVLAKALRMSGGDHIHGGTVVGKLEGEREMTLGFVDLLRDDFIEKDRSRGIFFTQDWVSMPGVIPVASGGIHVWHMPALTEIFGDDSVLQFGGGTLGHPWGNAPGAVANRVALEACVQARNEGRDLAREGNEIIREASKWSPELASACEVWKAIKF.

A propeptide spanning residues M1 to S2 is cleaved from the precursor. P3 bears the N-acetylproline mark. K14 is subject to N6,N6,N6-trimethyllysine. Residues N123 and T173 each contribute to the substrate site. Residue K175 is the Proton acceptor of the active site. A substrate-binding site is contributed by K177. Mg(2+)-binding residues include K201, D203, and E204. K201 is modified (N6-carboxylysine). The active-site Proton acceptor is H294. Substrate-binding residues include R295, H327, and S379.

This sequence belongs to the RuBisCO large chain family. Type I subfamily. In terms of assembly, heterohexadecamer of 8 large chains and 8 small chains; disulfide-linked. The disulfide link is formed within the large subunit homodimers. Mg(2+) is required as a cofactor. In terms of processing, the disulfide bond which can form in the large chain dimeric partners within the hexadecamer appears to be associated with oxidative stress and protein turnover.

The protein resides in the plastid. It is found in the chloroplast. The catalysed reaction is 2 (2R)-3-phosphoglycerate + 2 H(+) = D-ribulose 1,5-bisphosphate + CO2 + H2O. The enzyme catalyses D-ribulose 1,5-bisphosphate + O2 = 2-phosphoglycolate + (2R)-3-phosphoglycerate + 2 H(+). In terms of biological role, ruBisCO catalyzes two reactions: the carboxylation of D-ribulose 1,5-bisphosphate, the primary event in carbon dioxide fixation, as well as the oxidative fragmentation of the pentose substrate in the photorespiration process. Both reactions occur simultaneously and in competition at the same active site. In Calamus usitatus (Palm tree), this protein is Ribulose bisphosphate carboxylase large chain.